Consider the following 290-residue polypeptide: Poly-beta-1,6-N-acetyl-D-glucosamine N-deacetylase (290 aa).

The signal sequence occupies residues 1–28 (MKYRKLIILVLSILIILPVSTLDGHHIA). One can recognise a NodB homology domain in the interval 114–290 (RSVWINFDDM…KRWDGFHEKD (177 aa)).

The protein belongs to the polysaccharide deacetylase family.

It localises to the secreted. It is found in the cell wall. Functionally, catalyzes the N-deacetylation of poly-beta-1,6-N-acetyl-D-glucosamine (PNAG, also referred to as PIA), a biofilm adhesin polysaccharide. N-deacetylation is crucial for attachment of the polysaccharide to the bacterial cell surface; it leads to the introduction of positive charges in the otherwise neutral PIA polymer, allowing electrostatic interactions. The polypeptide is Poly-beta-1,6-N-acetyl-D-glucosamine N-deacetylase (icaB) (Staphylococcus aureus (strain Mu50 / ATCC 700699)).